A 149-amino-acid polypeptide reads, in one-letter code: Cytochrome c-type biogenesis protein CcmE (149 aa).

The Cytoplasmic segment spans residues Met1–Arg7. The chain crosses the membrane as a helical; Signal-anchor for type II membrane protein span at residues Leu8–Ala28. Over Phe29–Lys149 the chain is Periplasmic. Heme is bound by residues His123 and Tyr127.

This sequence belongs to the CcmE/CycJ family.

It localises to the cell inner membrane. Functionally, heme chaperone required for the biogenesis of c-type cytochromes. Transiently binds heme delivered by CcmC and transfers the heme to apo-cytochromes in a process facilitated by CcmF and CcmH. The chain is Cytochrome c-type biogenesis protein CcmE from Polaromonas naphthalenivorans (strain CJ2).